Reading from the N-terminus, the 286-residue chain is Eukaryotic translation initiation factor 3 subunit J (286 aa).

3 disordered regions span residues 1–35 (MSWDDEDFDIPSNSKQAAASWEEEGNDEPLLDSWD), 141–162 (AASGPTPARLTKDTPIDTHPLF), and 229–258 (KAERQARLKKAGGTATGGAGKKKAKPAVKT). Positions 21 to 35 (WEEEGNDEPLLDSWD) are enriched in acidic residues. The stretch at 35 to 75 (DIDEEEVARKKKEEEAKKKAEKEALKKKQEESKAKKLSKNK) forms a coiled coil.

It belongs to the eIF-3 subunit J family. In terms of assembly, component of the eukaryotic translation initiation factor 3 (eIF-3) complex.

The protein localises to the cytoplasm. Functionally, component of the eukaryotic translation initiation factor 3 (eIF-3) complex, which is involved in protein synthesis of a specialized repertoire of mRNAs and, together with other initiation factors, stimulates binding of mRNA and methionyl-tRNAi to the 40S ribosome. The eIF-3 complex specifically targets and initiates translation of a subset of mRNAs involved in cell proliferation. This is Eukaryotic translation initiation factor 3 subunit J from Debaryomyces hansenii (strain ATCC 36239 / CBS 767 / BCRC 21394 / JCM 1990 / NBRC 0083 / IGC 2968) (Yeast).